A 504-amino-acid chain; its full sequence is Maturase K (504 aa).

It belongs to the intron maturase 2 family. MatK subfamily.

It is found in the plastid. Its subcellular location is the chloroplast. Usually encoded in the trnK tRNA gene intron. Probably assists in splicing its own and other chloroplast group II introns. This is Maturase K from Gossypium gossypioides (Mexican cotton).